A 238-amino-acid chain; its full sequence is Thrombin-like enzyme halystase (238 aa).

Positions Ile1–Ala229 constitute a Peptidase S1 domain. Cystine bridges form between Cys7–Cys141, Cys28–Cys44, Cys76–Cys236, Cys120–Cys190, Cys152–Cys169, and Cys180–Cys205. The active-site Charge relay system is His43. N-linked (GlcNAc...) asparagine glycosylation is present at Asn81. Asp88 acts as the Charge relay system in catalysis. Asn100 carries N-linked (GlcNAc...) asparagine glycosylation. Catalysis depends on Ser184, which acts as the Charge relay system.

This sequence belongs to the peptidase S1 family. Snake venom subfamily. As to quaternary structure, monomer. In terms of tissue distribution, expressed by the venom gland.

Its subcellular location is the secreted. Its activity is regulated as follows. Inhibited by diisopropylfluorophosphate (DFP), PMSF and leupeptin. Its function is as follows. Thrombin-like snake venom serine protease. Cleaves fibrinogen (beta chain of fibrinogen (FGB) and more slowly alpha chain (FGA)) without inducing fibrin clotting and cleaves kininogen to produce bradykinin (KNG), resulting in the reduction of blood pressure. This is Thrombin-like enzyme halystase from Gloydius blomhoffii (Mamushi).